Reading from the N-terminus, the 205-residue chain is Auxin-responsive protein IAA8 (205 aa).

The tract at residues 1 to 48 (MECMASTEESLPASSSMDSCSGELPTTTTTAPAQSTASSGCRPPATAA) is disordered. The span at 7 to 19 (TEESLPASSSMDS) shows a compositional bias: polar residues. A compositionally biased stretch (low complexity) spans 25–39 (PTTTTTAPAQSTASS). An EAR-like (transcriptional repression) motif is present at residues 58 to 62 (LRLGL). The tract at residues 71-98 (DGNNPSTPRSSLTTATVTADRGGGGGGH) is disordered. Over residues 73–87 (NNPSTPRSSLTTATV) the composition is skewed to polar residues. The 97-residue stretch at 103 to 199 (SLFVKVYMEG…KRLRIARADD (97 aa)) folds into the PB1 domain.

It belongs to the Aux/IAA family. In terms of assembly, homodimers and heterodimers. Highly expressed in green shoots. Expressed in flowers.

The protein localises to the nucleus. Its function is as follows. Aux/IAA proteins are short-lived transcriptional factors that function as repressors of early auxin response genes at low auxin concentrations. The sequence is that of Auxin-responsive protein IAA8 (IAA8) from Oryza sativa subsp. japonica (Rice).